The chain runs to 260 residues: uncharacterized protein (260 aa).

The signal sequence occupies residues M1–S22. C23 is lipidated: N-palmitoyl cysteine. C23 carries the S-diacylglycerol cysteine lipid modification.

Belongs to the staphylococcal tandem lipoprotein family.

The protein resides in the cell membrane. This is an uncharacterized protein from Staphylococcus aureus (strain N315).